Here is a 293-residue protein sequence, read N- to C-terminus: Bifunctional protein FolD (293 aa).

NADP(+)-binding positions include 164–166 (GRS), serine 193, and threonine 234.

It belongs to the tetrahydrofolate dehydrogenase/cyclohydrolase family. As to quaternary structure, homodimer.

It carries out the reaction (6R)-5,10-methylene-5,6,7,8-tetrahydrofolate + NADP(+) = (6R)-5,10-methenyltetrahydrofolate + NADPH. The catalysed reaction is (6R)-5,10-methenyltetrahydrofolate + H2O = (6R)-10-formyltetrahydrofolate + H(+). It participates in one-carbon metabolism; tetrahydrofolate interconversion. Catalyzes the oxidation of 5,10-methylenetetrahydrofolate to 5,10-methenyltetrahydrofolate and then the hydrolysis of 5,10-methenyltetrahydrofolate to 10-formyltetrahydrofolate. This is Bifunctional protein FolD from Phocaeicola vulgatus (strain ATCC 8482 / DSM 1447 / JCM 5826 / CCUG 4940 / NBRC 14291 / NCTC 11154) (Bacteroides vulgatus).